Here is a 120-residue protein sequence, read N- to C-terminus: Large ribosomal subunit protein uL22 (120 aa).

It belongs to the universal ribosomal protein uL22 family. Part of the 50S ribosomal subunit.

Its function is as follows. This protein binds specifically to 23S rRNA; its binding is stimulated by other ribosomal proteins, e.g. L4, L17, and L20. It is important during the early stages of 50S assembly. It makes multiple contacts with different domains of the 23S rRNA in the assembled 50S subunit and ribosome. The globular domain of the protein is located near the polypeptide exit tunnel on the outside of the subunit, while an extended beta-hairpin is found that lines the wall of the exit tunnel in the center of the 70S ribosome. In Oenococcus oeni (strain ATCC BAA-331 / PSU-1), this protein is Large ribosomal subunit protein uL22.